The sequence spans 184 residues: NADH-quinone oxidoreductase subunit B (184 aa).

Residues cysteine 63, cysteine 64, cysteine 128, and cysteine 158 each coordinate [4Fe-4S] cluster.

The protein belongs to the complex I 20 kDa subunit family. NDH-1 is composed of 14 different subunits. Subunits NuoB, C, D, E, F, and G constitute the peripheral sector of the complex. The cofactor is [4Fe-4S] cluster.

Its subcellular location is the cell inner membrane. It carries out the reaction a quinone + NADH + 5 H(+)(in) = a quinol + NAD(+) + 4 H(+)(out). Functionally, NDH-1 shuttles electrons from NADH, via FMN and iron-sulfur (Fe-S) centers, to quinones in the respiratory chain. The immediate electron acceptor for the enzyme in this species is believed to be ubiquinone. Couples the redox reaction to proton translocation (for every two electrons transferred, four hydrogen ions are translocated across the cytoplasmic membrane), and thus conserves the redox energy in a proton gradient. In Xanthomonas oryzae pv. oryzae (strain MAFF 311018), this protein is NADH-quinone oxidoreductase subunit B.